A 282-amino-acid polypeptide reads, in one-letter code: Homeobox protein pv.1 (282 aa).

2 stretches are compositionally biased toward basic and acidic residues: residues 17 to 26 (EEAADGKDSM) and 44 to 59 (YAKE…DVQE). The segment at 17–128 (EEAADGKDSM…HRGESPKSDL (112 aa)) is disordered. 2 stretches are compositionally biased toward polar residues: residues 86–96 (WGSSDDFSSVG) and 103–114 (EGSPSPMRNSQE). The segment covering 116-128 (ETDHRGESPKSDL) has biased composition (basic and acidic residues). The segment at residues 129–188 (QRHLRTAFTPQQISKLEQAFNKQRYLGASERKKLATSLRLSEIQVKTWFQNRRMKLKRQI) is a DNA-binding region (homeobox).

Expressed in the ventral marginal zone of blastulae. At early gastrulation, expression begins to spread to the animal pole (ectoderm), and at stage 11.5 is expressed in a gradient across the animal cap, with levels highest in the ventral region. At the end of gastrulation, predominantly localized to the ventral and lateral regions of the closing slit blastopore. Also expressed at a low level in ventral endoderm.

It is found in the nucleus. Transcriptional repressor. Acts in a ventral signaling pathway downstream of bmp4, which suppresses dorsal mesoderm formation and leads to both ventral mesoderm and ventral ectoderm formation. Acts in the ectoderm to simultaneously specify epidermal lineages and restrict neuralization. Represses transcription of dorsal-specific genes. Binds to DNA, with preference for the target sequences 5'-TAATGC-3' and 5'-TAATTG-3'. Acts in a pathway downstream of bmp4 and fgf to negatively regulate erythroid specification. The polypeptide is Homeobox protein pv.1 (Xenopus laevis (African clawed frog)).